We begin with the raw amino-acid sequence, 321 residues long: Inner membrane protein YtfF (321 aa).

Over 1–4 (MISG) the chain is Cytoplasmic. A helical transmembrane segment spans residues 5-25 (VLYALLAGLMWGLIFVGPLIV). An EamA domain is found at 13 to 141 (LMWGLIFVGP…IGIGLACVNI (129 aa)). The Periplasmic segment spans residues 26–30 (PEYPA). A helical membrane pass occupies residues 31–51 (MLQSMGRYLALGLIALPIAWL). The Cytoplasmic segment spans residues 52 to 65 (GRVRLRQLARRDWL). Residues 66 to 86 (TALMLTMMGNLIYYFCLASAI) form a helical membrane-spanning segment. Topologically, residues 87-92 (QRTGAP) are periplasmic. A helical membrane pass occupies residues 93-113 (VSTMIIGTLPVVIPVFANLLY). Residues 114-120 (SQRDGKL) are Cytoplasmic-facing. The chain crosses the membrane as a helical span at residues 121 to 141 (AWGKLAPALICIGIGLACVNI). Residues 142 to 154 (AELNHGLPDFDWA) are Periplasmic-facing. A helical transmembrane segment spans residues 155–175 (RYTSGIVLALVSVVCWAWYAL). Topologically, residues 176 to 194 (RNARWLRENPDKHPMMWAT) are cytoplasmic. A helical transmembrane segment spans residues 195–215 (AQALVTLPVSLIGYLVACYWL). The Periplasmic segment spans residues 216 to 230 (NTQTPDFSLPFGPRP). The chain crosses the membrane as a helical span at residues 231–251 (LVFISLMVAIAVLCSWVGALC). Residues 252–261 (WNVASQLLPT) are Cytoplasmic-facing. The helical transmembrane segment at 262–282 (VILGPLIVFETLAGLLYTFLL) threads the bilayer. Residues 283-285 (RQQ) lie on the Periplasmic side of the membrane. Residues 286–306 (MPPLMTLSGIALLVIGVVIAV) traverse the membrane as a helical segment. Topologically, residues 307–321 (RAKPEKPLTESVSES) are cytoplasmic.

It is found in the cell inner membrane. The chain is Inner membrane protein YtfF (ytfF) from Escherichia coli (strain K12).